A 184-amino-acid polypeptide reads, in one-letter code: Probable RNA 2'-phosphotransferase (184 aa).

The protein belongs to the KptA/TPT1 family.

Its function is as follows. Removes the 2'-phosphate from RNA via an intermediate in which the phosphate is ADP-ribosylated by NAD followed by a presumed transesterification to release the RNA and generate ADP-ribose 1''-2''-cyclic phosphate (APPR&gt;P). May function as an ADP-ribosylase. The polypeptide is Probable RNA 2'-phosphotransferase (Rhizobium leguminosarum bv. trifolii (strain WSM2304)).